The sequence spans 354 residues: tRNA N6-adenosine threonylcarbamoyltransferase (354 aa).

2 residues coordinate Fe cation: His-111 and His-115. Substrate is bound by residues 134–138 (LVSGG), Asp-167, Gly-180, and Asn-279. Asp-319 serves as a coordination point for Fe cation.

The protein belongs to the KAE1 / TsaD family. Fe(2+) is required as a cofactor.

It localises to the cytoplasm. It catalyses the reaction L-threonylcarbamoyladenylate + adenosine(37) in tRNA = N(6)-L-threonylcarbamoyladenosine(37) in tRNA + AMP + H(+). In terms of biological role, required for the formation of a threonylcarbamoyl group on adenosine at position 37 (t(6)A37) in tRNAs that read codons beginning with adenine. Is involved in the transfer of the threonylcarbamoyl moiety of threonylcarbamoyl-AMP (TC-AMP) to the N6 group of A37, together with TsaE and TsaB. TsaD likely plays a direct catalytic role in this reaction. This is tRNA N6-adenosine threonylcarbamoyltransferase from Neisseria meningitidis serogroup C / serotype 2a (strain ATCC 700532 / DSM 15464 / FAM18).